The sequence spans 151 residues: SsrA-binding protein (151 aa).

The protein belongs to the SmpB family.

The protein localises to the cytoplasm. Required for rescue of stalled ribosomes mediated by trans-translation. Binds to transfer-messenger RNA (tmRNA), required for stable association of tmRNA with ribosomes. tmRNA and SmpB together mimic tRNA shape, replacing the anticodon stem-loop with SmpB. tmRNA is encoded by the ssrA gene; the 2 termini fold to resemble tRNA(Ala) and it encodes a 'tag peptide', a short internal open reading frame. During trans-translation Ala-aminoacylated tmRNA acts like a tRNA, entering the A-site of stalled ribosomes, displacing the stalled mRNA. The ribosome then switches to translate the ORF on the tmRNA; the nascent peptide is terminated with the 'tag peptide' encoded by the tmRNA and targeted for degradation. The ribosome is freed to recommence translation, which seems to be the essential function of trans-translation. In Geotalea uraniireducens (strain Rf4) (Geobacter uraniireducens), this protein is SsrA-binding protein.